The chain runs to 139 residues: D-ribose pyranase (139 aa).

Residue His-20 is the Proton donor of the active site. Substrate is bound by residues Asp-28, His-106, and 128–130; that span reads YAN.

The protein belongs to the RbsD / FucU family. RbsD subfamily. In terms of assembly, homodecamer.

The protein localises to the cytoplasm. The catalysed reaction is beta-D-ribopyranose = beta-D-ribofuranose. It participates in carbohydrate metabolism; D-ribose degradation; D-ribose 5-phosphate from beta-D-ribopyranose: step 1/2. Functionally, catalyzes the interconversion of beta-pyran and beta-furan forms of D-ribose. This chain is D-ribose pyranase, found in Escherichia coli O139:H28 (strain E24377A / ETEC).